Consider the following 930-residue polypeptide: MSVITAAPLLALLREDDHTVKSYALHSINEVVDQLWSEVSNDITDIEALYEDSKFEDRKLAALVVSKIYYNLGEYESAVRYALAAEEYFDINEKSRYVETIVSQSIEMYIKLATENYGKEKSEIDLQLVSIFERMLNKCITAGEYKLALGIALESYRLDVVTNILTQQTSEPNMLKLITYVLIAATTTVSNTHFKINILYALFDILIRLKAPDYFAVSKIIVNLNDSKLAARLFDKLVSEKNTEIAYQIAFDLVTSASQGLLNELVATLSTGEGNDRLVEILSGLPTCDFYNTFLHANKRIDRSLLNKSKSSMDGKFSLFHTAVSVSNAFMHAGTTDDTFVRANLQWLGKAQNWAKFTATASLGIIHQGNLTGGKKIMEPYLPGSRASSRYIKGGSLYGLGLIYAGYGKEIIGYLKDQIVENSSNATDDDVDVLLHGASLGIGLAGMSSNSTEIFEALKEVLYADSANSGAAAALGIGLTMLGSGDETVAENLYTYAQETSHGEITKGLAIALALLNYGREELADETIKKMLEHENDSMRYGAVYTIALAYAGTSSNEAVKKLLHVAVSDSNDDVRRASVTALGFVLIRDYTTVPRIVELLSESHNPHVRCGTAFALGVACAGRGLQAAIDVLEPLTNDPVDFVRQAAMIALSMILIQQTEKTNVKVRDVNEQLRNVIANKHQEGLAKFGACVAQGIINAGGRNVTIQLENSEMGTLNTKSVIGLAMFTQFWYWFPLAHFLSLSFTPTTTIGVRSHDLKIPKFSFHCHTKEGIFDYPPMFEEDIDKSIEKVATAVLSTTAKAKARAKKSKKDKAVEPDKSKEEIKVENEQRDKKEHDADVPEEEFKIKYTSTYYKVENMTRVVPQQLKYIAFPKDERFTPVRKFKGSNGVIVLSDKTPDEPVEVIKTVRQEKETDAPLPAPFKVQDDLEF.

PC repeat units follow at residues 358–391 (TATA…SSRY), 395–428 (GSLY…NATD), 437–471 (GASL…NSGA), 472–506 (AAAL…GEIT), 508–541 (GLAI…SMRY), 542–577 (GAVY…DVRR), 578–610 (ASVT…PHVR), 612–646 (GTAF…FVRQ), 647–684 (AAMI…KHQE), and 690–722 (GACV…TKSV). Disordered regions lie at residues 806-840 (AKKS…DADV) and 911-930 (EKET…DLEF). The span at 812-840 (DKAVEPDKSKEEIKVENEQRDKKEHDADV) shows a compositional bias: basic and acidic residues.

It belongs to the proteasome subunit S1 family.

In terms of biological role, acts as a regulatory subunit of the 26S proteasome which is involved in the ATP-dependent degradation of ubiquitinated proteins. The polypeptide is 26S proteasome regulatory subunit RPN2 (RPN2) (Eremothecium gossypii (strain ATCC 10895 / CBS 109.51 / FGSC 9923 / NRRL Y-1056) (Yeast)).